Here is a 218-residue protein sequence, read N- to C-terminus: MKFFIDTANLDQIREANELGVLDGVTTNPSLMAKEGIRGVENQRKHYLEICEIVGGDVSAEVIATDLEGMIKEGEELAALHPNIVVKVPCIEAGIKAIKYFTRKGIRTNCTLVFSVGQALLAAKAGATYVSPFVGRLDDIASDGIELVRKIVEMYDYYDYDTQVLAASIRSTQHIIQCVEAGADVATCPLSAIKGLLKHPLTDSGLATFLADYKKVNG.

The active-site Schiff-base intermediate with substrate is Lys-87.

This sequence belongs to the transaldolase family. Type 3B subfamily.

Its subcellular location is the cytoplasm. The catalysed reaction is D-sedoheptulose 7-phosphate + D-glyceraldehyde 3-phosphate = D-erythrose 4-phosphate + beta-D-fructose 6-phosphate. The protein operates within carbohydrate degradation; pentose phosphate pathway; D-glyceraldehyde 3-phosphate and beta-D-fructose 6-phosphate from D-ribose 5-phosphate and D-xylulose 5-phosphate (non-oxidative stage): step 2/3. Functionally, transaldolase is important for the balance of metabolites in the pentose-phosphate pathway. The protein is Probable transaldolase of Parabacteroides distasonis (strain ATCC 8503 / DSM 20701 / CIP 104284 / JCM 5825 / NCTC 11152).